An 874-amino-acid polypeptide reads, in one-letter code: Bifunctional uridylyltransferase/uridylyl-removing enzyme (874 aa).

Residues 1–336 (MIDTSTITNP…DNGKTVETIQ (336 aa)) are uridylyltransferase. Residues 337–695 (LSDDFQIRGH…LSKKATRGGT (359 aa)) are uridylyl-removing. Residues 455–577 (VDEHSVRLIK…VRDEERLDYL (123 aa)) form the HD domain. ACT domains follow at residues 696 to 779 (EVFV…RAPR) and 802 to 874 (TMEL…TPQD).

The protein belongs to the GlnD family. Mg(2+) serves as cofactor.

The enzyme catalyses [protein-PII]-L-tyrosine + UTP = [protein-PII]-uridylyl-L-tyrosine + diphosphate. It catalyses the reaction [protein-PII]-uridylyl-L-tyrosine + H2O = [protein-PII]-L-tyrosine + UMP + H(+). Uridylyltransferase (UTase) activity is inhibited by glutamine, while glutamine activates uridylyl-removing (UR) activity. In terms of biological role, modifies, by uridylylation and deuridylylation, the PII regulatory proteins (GlnB and homologs), in response to the nitrogen status of the cell that GlnD senses through the glutamine level. Under low glutamine levels, catalyzes the conversion of the PII proteins and UTP to PII-UMP and PPi, while under higher glutamine levels, GlnD hydrolyzes PII-UMP to PII and UMP (deuridylylation). Thus, controls uridylylation state and activity of the PII proteins, and plays an important role in the regulation of nitrogen assimilation and metabolism. This Photobacterium profundum (strain SS9) protein is Bifunctional uridylyltransferase/uridylyl-removing enzyme.